The following is a 203-amino-acid chain: Transmembrane protein 269 (203 aa).

Transmembrane regions (helical) follow at residues 60–80, 124–144, and 157–177; these read GLAS…LAII, FILC…SYYP, and LVYI…SAFY.

Its subcellular location is the membrane. The sequence is that of Transmembrane protein 269 from Homo sapiens (Human).